We begin with the raw amino-acid sequence, 565 residues long: NAD-dependent malic enzyme (565 aa).

Tyr104 acts as the Proton donor in catalysis. Position 157 (Arg157) interacts with NAD(+). The active-site Proton acceptor is the Lys175. Residues Glu246, Asp247, and Asp270 each contribute to the a divalent metal cation site. NAD(+) is bound by residues Asp270 and Asn418.

Belongs to the malic enzymes family. As to quaternary structure, homotetramer. Mg(2+) is required as a cofactor. Requires Mn(2+) as cofactor.

It catalyses the reaction (S)-malate + NAD(+) = pyruvate + CO2 + NADH. It carries out the reaction oxaloacetate + H(+) = pyruvate + CO2. The chain is NAD-dependent malic enzyme from Yersinia enterocolitica serotype O:8 / biotype 1B (strain NCTC 13174 / 8081).